Here is a 494-residue protein sequence, read N- to C-terminus: One cut domain family member 3 (494 aa).

3 disordered regions span residues 130–162, 199–239, and 295–319; these read AAAV…RLAA, LSPL…GDKL, and AHGP…AAAE. 2 stretches are compositionally biased toward pro residues: residues 148-158 and 214-225; these read AAAPPPPPPPQ and PQPPPPPPPPPL. A compositionally biased stretch (gly residues) spans 297 to 313; sequence GPHGGGGGPGGSGGGPS. The segment at residues 312–398 is a DNA-binding region (CUT); the sequence is PSAGAAAEEI…QRMSALRLAA (87 aa). The homeobox DNA-binding region spans 414–473; that stretch reads PKKQRLVFTDLQRRTLIAIFKENKRPSKEMQVTISQQLGLELNTVSNFFMNARRRCMNRW. The tract at residues 475–494 is disordered; that stretch reads EEPSTAPGGPAGATATFSKA. Residues 476–494 are compositionally biased toward low complexity; it reads EPSTAPGGPAGATATFSKA.

This sequence belongs to the CUT homeobox family.

Its subcellular location is the nucleus. Functionally, transcriptional activator. Binds the consensus DNA sequence 5'-DHWATTGAYTWWD-3' on a variety of gene promoters such as those of HNF3B and TTR. The polypeptide is One cut domain family member 3 (ONECUT3) (Homo sapiens (Human)).